The following is a 242-amino-acid chain: Probable transcriptional regulatory protein HEAR0561 (242 aa).

It belongs to the TACO1 family.

It is found in the cytoplasm. This chain is Probable transcriptional regulatory protein HEAR0561, found in Herminiimonas arsenicoxydans.